Here is a 439-residue protein sequence, read N- to C-terminus: Potassium/proton antiporter CemA (439 aa).

6 helical membrane-spanning segments follow: residues 55–75 (IMLY…WSLL), 79–99 (ISLF…NFFN), 220–240 (YMLF…IWFL), 317–337 (LLHL…FILG), 364–384 (ILLL…EIVI), and 399–419 (IISC…KYWI).

This sequence belongs to the CemA family.

The protein resides in the plastid. Its subcellular location is the chloroplast inner membrane. It catalyses the reaction K(+)(in) + H(+)(out) = K(+)(out) + H(+)(in). In terms of biological role, contributes to K(+)/H(+) antiport activity by supporting proton efflux to control proton extrusion and homeostasis in chloroplasts in a light-dependent manner to modulate photosynthesis. Prevents excessive induction of non-photochemical quenching (NPQ) under continuous-light conditions. Indirectly promotes efficient inorganic carbon uptake into chloroplasts. The sequence is that of Potassium/proton antiporter CemA from Physcomitrium patens (Spreading-leaved earth moss).